A 345-amino-acid polypeptide reads, in one-letter code: Phosphate acyltransferase (345 aa).

The protein belongs to the PlsX family. Homodimer. Probably interacts with PlsY.

It is found in the cytoplasm. The catalysed reaction is a fatty acyl-[ACP] + phosphate = an acyl phosphate + holo-[ACP]. The protein operates within lipid metabolism; phospholipid metabolism. Catalyzes the reversible formation of acyl-phosphate (acyl-PO(4)) from acyl-[acyl-carrier-protein] (acyl-ACP). This enzyme utilizes acyl-ACP as fatty acyl donor, but not acyl-CoA. This Dichelobacter nodosus (strain VCS1703A) protein is Phosphate acyltransferase.